The chain runs to 1159 residues: Anillin-like protein 1 (1159 aa).

Disordered regions lie at residues 43–81 (VASP…MKEN), 266–327 (QQVS…TKTT), 409–430 (KLKK…APVP), 549–608 (AIPK…GDVI), and 629–699 (FGFM…KSSS). The span at 50-60 (FGSSSKCNDGP) shows a compositional bias: polar residues. Low complexity predominate over residues 287 to 327 (ASSATSSSSSTTTLTTISGASGSTTSGISNAPQDSASTKTT). The segment covering 421–430 (PPAPTSAPVP) has biased composition (pro residues). The span at 564-584 (SASSLYSQGARSNTASPASKS) shows a compositional bias: polar residues. Residues 660–684 (VIEEETENEDESEPYEPEEEEDDDA) are compositionally biased toward acidic residues. In terms of domain architecture, PH spans 1029–1147 (DITYHGFLSM…WLSLINSTSK (119 aa)).

Strongly expressed in dividing neuroblasts under the ventral epidermal cells during ventral enclosure.

It is found in the cytoplasm. The protein localises to the cell cortex. It localises to the cytoskeleton. Its subcellular location is the spindle. The protein resides in the midbody. It is found in the cleavage furrow. Required for contractile events in embryos that occur prior to mitosis, such as cortical ruffling and pseudocleavage. Promotes membrane ruffling by organizing cortical patches of septins and myosin II. Not generally required for cytokinesis in mitotic cells. Required for the asymmetric cleavage events that extrude the two polar bodies during oocyte meiosis. Not required for meiotic contractile ring assembly, initiation or closure but is required for the transformation of the contractile ring from a disk above the spindle to a tube around the spindle midzone. Promotes astral microtubule-directed cortical myosin polarization and cleavage furrow ingression. Regulates neuroblast cytokinesis during mid- to late-embryogenesis and is required for ventral enclosure. The protein is Anillin-like protein 1 (ani-1) of Caenorhabditis elegans.